The chain runs to 156 residues: Cyanate hydratase (156 aa).

Residues R96, E99, and S122 contribute to the active site.

Belongs to the cyanase family.

The enzyme catalyses cyanate + hydrogencarbonate + 3 H(+) = NH4(+) + 2 CO2. Functionally, catalyzes the reaction of cyanate with bicarbonate to produce ammonia and carbon dioxide. This is Cyanate hydratase from Mycobacteroides abscessus (strain ATCC 19977 / DSM 44196 / CCUG 20993 / CIP 104536 / JCM 13569 / NCTC 13031 / TMC 1543 / L948) (Mycobacterium abscessus).